A 21-amino-acid polypeptide reads, in one-letter code: Nigrocin-2 (21 aa).

A disulfide bridge connects residues Cys-15 and Cys-21.

Expressed by the skin dorsal glands.

The protein localises to the secreted. Thanks to its single linear amphipathic alpha-helix, may integrate into membrane phospholipids, leading to lysis of the membrane. Shows antibacterial activity against both Gram-positive and Gram-negative bacteria and against the fungus C.albicans. Has no hemolytic activity. This Pelophylax nigromaculatus (Black-spotted frog) protein is Nigrocin-2.